A 484-amino-acid polypeptide reads, in one-letter code: L-carnitine dehydrogenase/betainyl-CoA thioesterase (484 aa).

Positions 1–322 (MKIAAIGGGV…ENRFYARNGK (322 aa)) are L-carnitine dehydrogenase. Residue 7 to 12 (GGGVIG) coordinates NAD(+). Residues 323–484 (VQADYPLRLH…RAVRLKETSA (162 aa)) form a betainyl-CoA thioesterase region.

It in the N-terminal section; belongs to the 3-hydroxyacyl-CoA dehydrogenase family. L-carnitine dehydrogenase subfamily. The protein in the C-terminal section; belongs to the betainyl-CoA thioesterase family. Homodimer.

Its subcellular location is the cytoplasm. The enzyme catalyses carnitine + NAD(+) = 3-dehydrocarnitine + NADH + H(+). The catalysed reaction is N,N,N-trimethylglycyl-CoA + H2O = glycine betaine + CoA + H(+). The protein operates within amine and polyamine metabolism; carnitine metabolism. Its function is as follows. Multifunctional enzyme that catalyzes the NAD(+)-dependent oxidation of L-carnitine to 3-dehydrocarnitine and the cleavage of betainyl-CoA (N,N,N-trimethylglycyl-CoA) into glycine betaine and coenzyme A. The polypeptide is L-carnitine dehydrogenase/betainyl-CoA thioesterase (Agrobacterium fabrum (strain C58 / ATCC 33970) (Agrobacterium tumefaciens (strain C58))).